We begin with the raw amino-acid sequence, 195 residues long: Nucleoside triphosphate pyrophosphatase (195 aa).

Asp-76 serves as the catalytic Proton acceptor.

Belongs to the Maf family. The cofactor is a divalent metal cation.

Its subcellular location is the cytoplasm. It catalyses the reaction a ribonucleoside 5'-triphosphate + H2O = a ribonucleoside 5'-phosphate + diphosphate + H(+). The catalysed reaction is a 2'-deoxyribonucleoside 5'-triphosphate + H2O = a 2'-deoxyribonucleoside 5'-phosphate + diphosphate + H(+). In terms of biological role, nucleoside triphosphate pyrophosphatase. May have a dual role in cell division arrest and in preventing the incorporation of modified nucleotides into cellular nucleic acids. In Pelagibacter ubique (strain HTCC1062), this protein is Nucleoside triphosphate pyrophosphatase.